Reading from the N-terminus, the 130-residue chain is Small ribosomal subunit protein uS9 (130 aa).

It belongs to the universal ribosomal protein uS9 family.

The sequence is that of Small ribosomal subunit protein uS9 from Azotobacter vinelandii (strain DJ / ATCC BAA-1303).